Here is a 204-residue protein sequence, read N- to C-terminus: Tat proofreading chaperone DmsD (204 aa).

It belongs to the TorD/DmsD family. DmsD subfamily.

Functionally, required for biogenesis/assembly of DMSO reductase, but not for the interaction of the DmsA signal peptide with the Tat system. May be part of a chaperone cascade complex that facilitates a folding-maturation pathway for the substrate protein. This Salmonella typhi protein is Tat proofreading chaperone DmsD.